Here is a 153-residue protein sequence, read N- to C-terminus: uncharacterized protein (153 aa).

An N-terminal signal peptide occupies residues 1–19; it reads MRKYIPLVLFIFSWPVLCA. Residues arginine 46, glutamate 54, and arginine 88 contribute to the active site.

It belongs to the thermonuclease family.

This is an uncharacterized protein from Escherichia coli.